The chain runs to 127 residues: Aspartate 1-decarboxylase (127 aa).

Ser-25 functions as the Schiff-base intermediate with substrate; via pyruvic acid in the catalytic mechanism. Ser-25 is modified (pyruvic acid (Ser)). Substrate is bound at residue Thr-57. Tyr-58 serves as the catalytic Proton donor. Residue 73–75 participates in substrate binding; sequence GAA.

This sequence belongs to the PanD family. Heterooctamer of four alpha and four beta subunits. Requires pyruvate as cofactor. In terms of processing, is synthesized initially as an inactive proenzyme, which is activated by self-cleavage at a specific serine bond to produce a beta-subunit with a hydroxyl group at its C-terminus and an alpha-subunit with a pyruvoyl group at its N-terminus.

It localises to the cytoplasm. It carries out the reaction L-aspartate + H(+) = beta-alanine + CO2. The protein operates within cofactor biosynthesis; (R)-pantothenate biosynthesis; beta-alanine from L-aspartate: step 1/1. Its function is as follows. Catalyzes the pyruvoyl-dependent decarboxylation of aspartate to produce beta-alanine. The polypeptide is Aspartate 1-decarboxylase (Listeria innocua serovar 6a (strain ATCC BAA-680 / CLIP 11262)).